A 157-amino-acid polypeptide reads, in one-letter code: 3-dehydroquinate dehydratase (157 aa).

Tyr29 functions as the Proton acceptor in the catalytic mechanism. The substrate site is built by Asn80, His86, and Asp93. Residue His107 is the Proton donor of the active site. Substrate-binding positions include 108 to 109 (IS) and Arg118.

The protein belongs to the type-II 3-dehydroquinase family. Homododecamer.

The catalysed reaction is 3-dehydroquinate = 3-dehydroshikimate + H2O. Its pathway is metabolic intermediate biosynthesis; chorismate biosynthesis; chorismate from D-erythrose 4-phosphate and phosphoenolpyruvate: step 3/7. Catalyzes a trans-dehydration via an enolate intermediate. This is 3-dehydroquinate dehydratase (aroQ) from Streptomyces coelicolor (strain ATCC BAA-471 / A3(2) / M145).